The following is a 333-amino-acid chain: Chlorophyllide reductase 35.5 kDa chain (333 aa).

Residues 1-17 (MTDAPELKAFDQRLRDE) are compositionally biased toward basic and acidic residues. Residues 1–30 (MTDAPELKAFDQRLRDEAAEEPTLEVPQGE) are disordered. ATP-binding positions include 45 to 50 (GIGKSF) and K74. S49 is a binding site for Mg(2+). 2 residues coordinate [4Fe-4S] cluster: C130 and C165. Residue 219–220 (NK) participates in ATP binding.

Belongs to the NifH/BchL/ChlL family. As to quaternary structure, homodimer. Chlorophyllide reductase is composed of three subunits; BchX, BchY and BchZ. It depends on [4Fe-4S] cluster as a cofactor.

It catalyses the reaction 3-deacetyl-3-vinylbacteriochlorophyllide a + 2 oxidized [2Fe-2S]-[ferredoxin] + ADP + phosphate = chlorophyllide a + 2 reduced [2Fe-2S]-[ferredoxin] + ATP + H2O + H(+). It carries out the reaction bacteriochlorophyllide a + 2 oxidized [2Fe-2S]-[ferredoxin] + ADP + phosphate = 3-acetyl-3-devinylchlorophyllide a + 2 reduced [2Fe-2S]-[ferredoxin] + ATP + H2O + H(+). The catalysed reaction is 3-deacetyl-3-(1-hydroxyethyl)bacteriochlorophyllide a + 2 oxidized [2Fe-2S]-[ferredoxin] + ADP + phosphate = 3-devinyl-3-(1-hydroxyethyl)chlorophyllide a + 2 reduced [2Fe-2S]-[ferredoxin] + ATP + H2O + H(+). It participates in porphyrin-containing compound metabolism; bacteriochlorophyll biosynthesis. Converts chlorophylls (Chl) into bacteriochlorophylls (BChl) by reducing ring B of the tetrapyrrole. The protein is Chlorophyllide reductase 35.5 kDa chain (bchX) of Cereibacter sphaeroides (strain ATCC 17023 / DSM 158 / JCM 6121 / CCUG 31486 / LMG 2827 / NBRC 12203 / NCIMB 8253 / ATH 2.4.1.) (Rhodobacter sphaeroides).